The sequence spans 391 residues: Alkanesulfonate monooxygenase (391 aa).

Belongs to the SsuD family.

The catalysed reaction is an alkanesulfonate + FMNH2 + O2 = an aldehyde + FMN + sulfite + H2O + 2 H(+). Catalyzes the desulfonation of aliphatic sulfonates. The chain is Alkanesulfonate monooxygenase from Rhodopseudomonas palustris (strain ATCC BAA-98 / CGA009).